Reading from the N-terminus, the 886-residue chain is DNA gyrase subunit A (886 aa).

The Topo IIA-type catalytic domain maps to 35 to 501; sequence LPDVRDGLKP…GFEDLEDEDL (467 aa). The O-(5'-phospho-DNA)-tyrosine intermediate role is filled by Y123. The GyrA-box signature appears at 528 to 534; the sequence is QNRGGRG. The segment at 810-860 is disordered; sequence VKEDADEENEDEQSTVSEDGTEQQREAVVNDETPGNAIHTEVIDSEVNDED. Over residues 813–822 the composition is skewed to acidic residues; it reads DADEENEDEQ.

It belongs to the type II topoisomerase GyrA/ParC subunit family. In terms of assembly, heterotetramer, composed of two GyrA and two GyrB chains. In the heterotetramer, GyrA contains the active site tyrosine that forms a transient covalent intermediate with DNA, while GyrB binds cofactors and catalyzes ATP hydrolysis.

It is found in the cytoplasm. It carries out the reaction ATP-dependent breakage, passage and rejoining of double-stranded DNA.. Its function is as follows. A type II topoisomerase that negatively supercoils closed circular double-stranded (ds) DNA in an ATP-dependent manner to modulate DNA topology and maintain chromosomes in an underwound state. Negative supercoiling favors strand separation, and DNA replication, transcription, recombination and repair, all of which involve strand separation. Also able to catalyze the interconversion of other topological isomers of dsDNA rings, including catenanes and knotted rings. Type II topoisomerases break and join 2 DNA strands simultaneously in an ATP-dependent manner. The protein is DNA gyrase subunit A of Staphylococcus aureus (strain MRSA252).